We begin with the raw amino-acid sequence, 134 residues long: Profilin-1 (134 aa).

The cysteines at positions 13 and 118 are disulfide-linked. The Involved in PIP2 interaction signature appears at 84-100 (AVIRGKKGSGGITIKKT). Threonine 114 bears the Phosphothreonine mark.

The protein belongs to the profilin family. In terms of assembly, occurs in many kinds of cells as a complex with monomeric actin in a 1:1 ratio. In terms of processing, phosphorylated by MAP kinases.

Its subcellular location is the cytoplasm. It is found in the cytoskeleton. Functionally, binds to actin and affects the structure of the cytoskeleton. At high concentrations, profilin prevents the polymerization of actin, whereas it enhances it at low concentrations. The sequence is that of Profilin-1 from Olea europaea (Common olive).